The primary structure comprises 329 residues: MPSPMISTDVCQDILGKQKEAVDFFFQAFQPKEAMQLAEKILGHSGWVFFSGVGKSGCVARKLVATLQSLSERALFFSPVDLLHGDLGLVSPGDIVCLFSKSGETQELLDTVPHLKSRRAILVAITSMPYSNLAALSDLVVILPSVAELDPFNLIPTNSTTCQMIFGDFLAMLLFHSRGVSLSTYGKNHPSGQVGMKANGKVKDFMFPKTEVPFCHLGDKVSFSLEVFSAYGCGCVCIVDPQFRLMGIFTDGDLRRSLASYGGEVLSLSLEKVMTANPRCITEDSDIAIALQLMESSSPVAVLPVLDNEENRHVTGLLHMHTLAKAGLL.

The SIS domain occupies 37–180; the sequence is LAEKILGHSG…AMLLFHSRGV (144 aa). Residue 52–57 coordinates ATP; the sequence is GVGKSG. 2 CBS domains span residues 206-265 and 274-329; these read MFPK…GGEV and MTAN…AGLL.

The protein belongs to the SIS family. GutQ/KpsF subfamily.

This is an uncharacterized protein from Chlamydia pneumoniae (Chlamydophila pneumoniae).